Here is a 306-residue protein sequence, read N- to C-terminus: Lipoyl synthase (306 aa).

7 residues coordinate [4Fe-4S] cluster: Cys55, Cys60, Cys66, Cys81, Cys85, Cys88, and Ser294. Residues 67-283 (WNHRTATFLL…RSYALARGFT (217 aa)) enclose the Radical SAM core domain.

This sequence belongs to the radical SAM superfamily. Lipoyl synthase family. The cofactor is [4Fe-4S] cluster.

It is found in the cytoplasm. It carries out the reaction [[Fe-S] cluster scaffold protein carrying a second [4Fe-4S](2+) cluster] + N(6)-octanoyl-L-lysyl-[protein] + 2 oxidized [2Fe-2S]-[ferredoxin] + 2 S-adenosyl-L-methionine + 4 H(+) = [[Fe-S] cluster scaffold protein] + N(6)-[(R)-dihydrolipoyl]-L-lysyl-[protein] + 4 Fe(3+) + 2 hydrogen sulfide + 2 5'-deoxyadenosine + 2 L-methionine + 2 reduced [2Fe-2S]-[ferredoxin]. The protein operates within protein modification; protein lipoylation via endogenous pathway; protein N(6)-(lipoyl)lysine from octanoyl-[acyl-carrier-protein]: step 2/2. Catalyzes the radical-mediated insertion of two sulfur atoms into the C-6 and C-8 positions of the octanoyl moiety bound to the lipoyl domains of lipoate-dependent enzymes, thereby converting the octanoylated domains into lipoylated derivatives. This chain is Lipoyl synthase, found in Chloroflexus aurantiacus (strain ATCC 29364 / DSM 637 / Y-400-fl).